Here is a 423-residue protein sequence, read N- to C-terminus: Histidine--tRNA ligase 2 (423 aa).

The protein belongs to the class-II aminoacyl-tRNA synthetase family. Homodimer.

The protein localises to the cytoplasm. The catalysed reaction is tRNA(His) + L-histidine + ATP = L-histidyl-tRNA(His) + AMP + diphosphate + H(+). This Bacillus cereus (strain ATCC 14579 / DSM 31 / CCUG 7414 / JCM 2152 / NBRC 15305 / NCIMB 9373 / NCTC 2599 / NRRL B-3711) protein is Histidine--tRNA ligase 2.